Here is a 141-residue protein sequence, read N- to C-terminus: Hemoglobin subunit alpha (141 aa).

Residues 1 to 141 (VLSPEDKNHV…VSTVLTSKYR (141 aa)) enclose the Globin domain. Ser3 bears the Phosphoserine mark. N6-succinyllysine is present on Lys7. Lys16 is modified (N6-acetyllysine; alternate). Lys16 carries the N6-succinyllysine; alternate modification. Phosphotyrosine is present on Tyr24. Phosphoserine is present on Ser35. The residue at position 40 (Lys40) is an N6-succinyllysine. Ser49 is modified (phosphoserine). Position 58 (His58) interacts with O2. A heme b-binding site is contributed by His87. Residue Ser102 is modified to Phosphoserine. Thr108 carries the post-translational modification Phosphothreonine. 2 positions are modified to phosphoserine: Ser124 and Ser131. Residues Thr134 and Thr137 each carry the phosphothreonine modification. Residue Ser138 is modified to Phosphoserine.

The protein belongs to the globin family. In terms of assembly, heterotetramer of two alpha chains and two beta chains. As to expression, red blood cells.

Its function is as follows. Involved in oxygen transport from the lung to the various peripheral tissues. In terms of biological role, hemopressin acts as an antagonist peptide of the cannabinoid receptor CNR1. Hemopressin-binding efficiently blocks cannabinoid receptor CNR1 and subsequent signaling. This chain is Hemoglobin subunit alpha (HBA), found in Spalax ehrenbergi (Middle East blind mole rat).